The primary structure comprises 404 residues: S-adenosylmethionine synthase (404 aa).

His-17 lines the ATP pocket. Mg(2+) is bound at residue Asp-19. K(+) is bound at residue Glu-45. L-methionine contacts are provided by Glu-58 and Gln-101. The tract at residues 101 to 111 (QSPDINRGVDR) is flexible loop. Residues 172–174 (DAK), 245–246 (RF), Asp-254, 260–261 (RK), Ala-277, and Lys-281 contribute to the ATP site. Asp-254 contributes to the L-methionine binding site. L-methionine is bound at residue Lys-285.

It belongs to the AdoMet synthase family. In terms of assembly, homotetramer; dimer of dimers. Mg(2+) is required as a cofactor. K(+) serves as cofactor.

The protein localises to the cytoplasm. The enzyme catalyses L-methionine + ATP + H2O = S-adenosyl-L-methionine + phosphate + diphosphate. It functions in the pathway amino-acid biosynthesis; S-adenosyl-L-methionine biosynthesis; S-adenosyl-L-methionine from L-methionine: step 1/1. Functionally, catalyzes the formation of S-adenosylmethionine (AdoMet) from methionine and ATP. The overall synthetic reaction is composed of two sequential steps, AdoMet formation and the subsequent tripolyphosphate hydrolysis which occurs prior to release of AdoMet from the enzyme. The protein is S-adenosylmethionine synthase of Pelodictyon phaeoclathratiforme (strain DSM 5477 / BU-1).